We begin with the raw amino-acid sequence, 879 residues long: MTTETGPDSEVKKAQEETPQQPEAAAAVTTPVTPAGHSHPETNSNEKHLTQQDTRPAEQSLDMEEKDYCEADGLSERTTPSKAQKSPQKIAKKFKSATCRVTLLDASEYECEVEKHGRGQVLFDLVCEHLNLLEKDYFGLTFCDADSQKNWLDPSKEIKKQIRSSPWNFAFTVKFYPPDPAQLTEDITRYYLCLQLRADIITGRLPCSFVTHALLGSYAVQAELGDHDTEEHVGNYVSELRFAPNQTRELEERIMELHKTYRGMTPGEAEIHFLENAKKLSMYGVDLHHAKDSEGIDIMLGVCANGLLIYRDRLRINRFAWPKILKISYKRSNFYIKIRPGEYEQFESTIGFKLPNHRSAKRLWKVCIEHHTFFRLVSPEPPPKGFLVMGSKFRYSGRTQAQTRQASALIDRPAPFFERSSSKRYTMSRSLDGAEFSRPASVSENHDAGPDGDKREDDAESGGRRSEAEEGEVRTPTKIKELKPEQETTPRHKQEFLDKPEDVLLKHQASINELKRTLKEPNSKLIHRDRDWERERRLPSSPASPSPKGTPEKASERAGLREGSEEKVKPPRPRAPESDTGDEDQDQERDAVFLKDNHLAIERKCSSITVSSTSSLEAEVDFTVIGDYHGGAFEDFSRSLPELDRDKSDSETEGLVFARDLKGPSSQEDESGGIEDSPDRGACSTPELPQFESVKAETMTVSSLAIRKKIEPEAMLQSRVSTADSTQVDGGAPAAKDFMTTPPCITTETISTTMENSLKSGKGAAAMIPGPQTVATEIRSLSPIIGKDVLTSTYGATAETLSTSTTTHVTKTVKGGFSETRIEKRIIITGDEDVDQDQALALAIKEAKLQHPDMLVTKAVVYRETDPSPEERDKKPQES.

A disordered region spans residues 1-64 (MTTETGPDSE…RPAEQSLDME (64 aa)). Over residues 17–35 (ETPQQPEAAAAVTTPVTPA) the composition is skewed to low complexity. Thr30 carries the phosphothreonine modification. Positions 38 to 50 (SHPETNSNEKHLT) are enriched in basic and acidic residues. Ser75 is modified (phosphoserine). Thr79 carries the post-translational modification Phosphothreonine. Residues 97–378 (ATCRVTLLDA…EHHTFFRLVS (282 aa)) enclose the FERM domain. Residue Tyr343 is modified to Phosphotyrosine. Residues Ser378, Ser430, Ser437, Ser461, and Ser466 each carry the phosphoserine modification. A disordered region spans residues 428-501 (SRSLDGAEFS…HKQEFLDKPE (74 aa)). A compositionally biased stretch (basic and acidic residues) spans 444 to 501 (ENHDAGPDGDKREDDAESGGRRSEAEEGEVRTPTKIKELKPEQETTPRHKQEFLDKPE). Thr475 bears the Phosphothreonine mark. The spectrin--actin-binding stretch occupies residues 483–541 (KPEQETTPRHKQEFLDKPEDVLLKHQASINELKRTLKEPNSKLIHRDRDWERERRLPSS). Ser510 is modified (phosphoserine). Positions 514–538 (LKRTLKEPNSKLIHRDRDWERERRL) are enriched in basic and acidic residues. Disordered regions lie at residues 514–596 (LKRT…FLKD), 633–687 (FEDF…STPE), and 718–742 (SRVSTADSTQVDGGAPAAKDFMTTP). Ser540, Ser541, Ser544, and Ser546 each carry phosphoserine. Thr550 carries the phosphothreonine modification. A compositionally biased stretch (basic and acidic residues) spans 550–577 (TPEKASERAGLREGSEEKVKPPRPRAPE). Phosphoserine occurs at positions 564 and 578. A Phosphothreonine modification is found at Thr580. Glu583, Gln587, Ser639, Ser648, Ser650, Ser665, Ser666, Asp669, Ser671, Ser677, and Ser684 each carry phosphoserine. A compositionally biased stretch (basic and acidic residues) spans 635 to 650 (DFSRSLPELDRDKSDS). Thr685 is modified (phosphothreonine). Residues 718 to 728 (SRVSTADSTQV) show a composition bias toward polar residues. Phosphoserine is present on residues Ser721, Pro742, Ala766, Ser782, and Ser868. Residues 744 to 879 (CITTETISTT…EERDKKPQES (136 aa)) form a C-terminal (CTD) region.

As to quaternary structure, interacts with AGAP2. Highest expression in brain, lower in heart and kidney. Within the brain, highest expression in cerebellum.

The protein localises to the cytoplasm. It is found in the cytoskeleton. Functionally, may function to confer stability and plasticity to neuronal membrane via multiple interactions, including the spectrin-actin-based cytoskeleton, integral membrane channels and membrane-associated guanylate kinases. In Rattus norvegicus (Rat), this protein is Band 4.1-like protein 1.